The sequence spans 246 residues: uncharacterized protein (246 aa).

This is an uncharacterized protein from Escherichia coli O157:H7.